The following is a 1032-amino-acid chain: MADLLDKIMGSSSSNRIPKRDNRMNQDKDEPTSKRSAPMFSTPKSTTPIGRDSFATMDTMNVQMNMFPVDIKDMPHKIQRFQVDVIVCSSNGKQINANLGVLAAKGDVNSHNRRLAQYYIMRTVHDKLLVKFSGKSHHFLAYDCAATLYLPEGVYTGDDQEEVTLTIDDFPKEEWKFVSKLSRRKDDSYLVVLKPAGFVYTQGEVAQEEANRMELTRIIEIVTSQKLNNEDYLQFGNATFPRLSPPHSEPDAISEIRSGFAKVSRLSQNGGGKAFMTVDTKISPFYKDTSVIKFSSNKLSEMKGGGGGRGGYGRSDSRDSRGGYRGGRSDSRDFRGVYGNRGGNDRYRDESRGRRDMYDSRRDSGSSNGADYSPSDAAELEHAFGERGNTKRCIEEALKGLDVECTHLKGNLIRVSSIAENNAENTSFMMKDDKGEREVTVAEYFLLQYNIKLKYPRLPLVVSKRFKHESFFPMELLRIAPGQRIKVNKMSPTVQSAMTGRNASMPQHHVKLVQDILRDNLKLEQNKYMDAFGIKLMSTEPIQMTAKLLPPAQIKFKGQTYMPDMSRPAFRTQDKFVEPARIRKIGIVVFDNCIQMRQAEDFCDKLSNFCRDNGITVEKDSRDWSIRELNSSDSVAIQNLMKKWLDDRVDILVGIAREKKPDVHDILKYFEESIGLQTIQLCQQTVDKMMGGQGGRQTIDNVMRKFNLKCGGTNFFVEIPNAVRGKAVCSNNETLRKKLLEHVQFIGFEISHGASRTLFDRSRSQMDGEPSVVGVSYSLTNSTQLGGFTYLQTQKEYKLQKLDEFFPKCVRSYKEHSKTLPTRIVIYRVGAGEGNFNRVKEEVEEMRRTFDKIQPGYRPHLVVIIAQRASHARVFPSCISGNRATDQNIPSGTCVENVLTSYGYDEFILSSQTPLIGTVRPCKYTILVNDAKWSKNELMHLTYFRAFGHQVSYQPPSVPDVLYAAENLAKRGRNNYKIHQRYVNLQAVENRIIKDHSELINEDMREELAAAIVDEMSVAMNGMTIPKRNFWA.

Disordered regions lie at residues 1-51 and 298-375; these read MADL…PIGR and KLSE…YSPS. The interval 1–551 is required to recruit the small-RNA amplification machinery to gene targets and promote gene silencing; the sequence is MADLLDKIMG…IQMTAKLLPP (551 aa). Over residues 18–33 the composition is skewed to basic and acidic residues; sequence PKRDNRMNQDKDEPTS. Residues 303–313 are compositionally biased toward gly residues; the sequence is KGGGGGRGGYG. 2 stretches are compositionally biased toward basic and acidic residues: residues 315–335 and 343–364; these read SDSR…RDFR and GNDR…RRDS. One can recognise a PAZ domain in the interval 376–481; the sequence is DAAELEHAFG…FPMELLRIAP (106 aa). Positions 650–977 constitute a Piwi domain; the sequence is DILVGIAREK…LAKRGRNNYK (328 aa).

This sequence belongs to the argonaute family. WAGO subfamily. As to expression, expressed in the nuclei of male and female germ cells.

It is found in the cytoplasm. The protein resides in the cytoplasmic ribonucleoprotein granule. It localises to the nucleus. In terms of biological role, argonaute protein which is involved in the endogenous small interfering RNA (endo-siRNA) pathway and is required for RNA-mediated gene silencing (RNAi) in the germline. Interacts with secondary 22G-RNAs in an hrde-2-dependent manner; 22G-RNAs are RNA-dependent RNA polymerase-derived endo-siRNAs, typically 22 nucleotides in length with a 5'-guanosine residue. Plays a key role in transgenerational epigenetic inheritance and germline immortality. May be involved in transgenerational gene silencing both by inducing subnuclear-co-localization of target genes into heterochromatin and by activation of small RNA amplification in the nuage. In Caenorhabditis elegans, this protein is Argonaute protein hrde-1.